A 247-amino-acid polypeptide reads, in one-letter code: Adenosylcobinamide-GDP ribazoletransferase (247 aa).

5 helical membrane-spanning segments follow: residues 34–54 (IITF…VFMV), 57–77 (AWCG…LMTG), 113–133 (GGLA…ELAL), 138–158 (ILAS…LLMY), and 194–214 (VLLL…AIFI).

It belongs to the CobS family. Mg(2+) is required as a cofactor.

It localises to the cell inner membrane. The enzyme catalyses alpha-ribazole + adenosylcob(III)inamide-GDP = adenosylcob(III)alamin + GMP + H(+). It catalyses the reaction alpha-ribazole 5'-phosphate + adenosylcob(III)inamide-GDP = adenosylcob(III)alamin 5'-phosphate + GMP + H(+). It participates in cofactor biosynthesis; adenosylcobalamin biosynthesis; adenosylcobalamin from cob(II)yrinate a,c-diamide: step 7/7. In terms of biological role, joins adenosylcobinamide-GDP and alpha-ribazole to generate adenosylcobalamin (Ado-cobalamin). Also synthesizes adenosylcobalamin 5'-phosphate from adenosylcobinamide-GDP and alpha-ribazole 5'-phosphate. In Shigella flexneri, this protein is Adenosylcobinamide-GDP ribazoletransferase.